A 561-amino-acid chain; its full sequence is Sesquiterpene synthase TPS2 (561 aa).

The segment at 6-26 is disordered; it reads ANGHSDVPSTQPPIGKQKKEI. Residues Arg277, Asp314, Asp318, Arg455, and Asp458 each coordinate (2E,6E)-farnesyl diphosphate. Mg(2+) contacts are provided by Asp314 and Asp318. A DDXXD motif motif is present at residues 314–318; that stretch reads DDTYD. The Mg(2+) site is built by Asp458, Ser462, and Glu466.

This sequence belongs to the terpene synthase family. Tpsa subfamily. Monomer. Mg(2+) is required as a cofactor.

The protein resides in the cytoplasm. It catalyses the reaction (2E,6E)-farnesyl diphosphate = beta-ylangene + diphosphate. The catalysed reaction is (2E,6E)-farnesyl diphosphate = beta-copaene + diphosphate. The enzyme catalyses (2E,6E)-farnesyl diphosphate = beta-cubebene + diphosphate. Its pathway is secondary metabolite biosynthesis; terpenoid biosynthesis. Sesquiterpene synthase involved in the biosynthesis of volatile organic compounds. Mediates the conversion of (2E,6E)-farnesyl diphosphate (FPP) into beta-ylangene, beta-copaene and beta-cubebene. Does not use (2E)-geranyl diphosphate (GPP) as substrate. This chain is Sesquiterpene synthase TPS2, found in Cananga odorata (Ylang-ylang tree).